Here is a 26-residue protein sequence, read N- to C-terminus: Toxin TdII-1 (26 aa).

The protein belongs to the long (4 C-C) scorpion toxin superfamily. Sodium channel inhibitor family. Beta subfamily. As to expression, expressed by the venom gland.

It localises to the secreted. Functionally, beta toxins bind voltage-independently at site-4 of sodium channels (Nav) and shift the voltage of activation toward more negative potentials thereby affecting sodium channel activation and promoting spontaneous and repetitive firing. This toxin is active against mammals and crustaceans. The polypeptide is Toxin TdII-1 (Tityus discrepans (Venezuelan scorpion)).